The following is a 356-amino-acid chain: Kelch domain-containing protein VC_1773 (356 aa).

Kelch repeat units lie at residues 72 to 125, 163 to 210, 288 to 331, and 333 to 355; these read KLYV…SLSP, TIFM…HKNN, NLYA…ASNG, and AMYV…SLLM.

The sequence is that of Kelch domain-containing protein VC_1773 from Vibrio cholerae serotype O1 (strain ATCC 39315 / El Tor Inaba N16961).